Consider the following 203-residue polypeptide: Chromophore lyase CpcT/CpeT 3 (203 aa).

The protein belongs to the CpcT/CpeT biliprotein lyase family.

In terms of biological role, covalently attaches a chromophore to Cys residue(s) of phycobiliproteins. The sequence is that of Chromophore lyase CpcT/CpeT 3 from Gloeobacter violaceus (strain ATCC 29082 / PCC 7421).